The primary structure comprises 387 residues: Xylose operon regulatory protein (387 aa).

In terms of domain architecture, HTH araC/xylS-type spans 288 to 386 (IQAMHYIRHR…EMTPKEFRLN (99 aa)). 2 DNA-binding regions (H-T-H motif) span residues 305-326 (GQVL…KNEM) and 353-376 (IKEI…KKEF).

Its function is as follows. Regulatory protein for the xylBAFGHR operon. This Haemophilus influenzae (strain ATCC 51907 / DSM 11121 / KW20 / Rd) protein is Xylose operon regulatory protein (xylR).